The following is a 399-amino-acid chain: Elongation factor Tu (399 aa).

A tr-type G domain is found at 10-204; the sequence is KDHVNIGTIG…AVDDYIDTPE (195 aa). The segment at 19–26 is G1; it reads GHVDHGKT. 19-26 is a GTP binding site; the sequence is GHVDHGKT. Residue Thr-26 participates in Mg(2+) binding. Residues 60–64 are G2; the sequence is GITIN. The interval 81–84 is G3; that stretch reads DCPG. GTP-binding positions include 81–85 and 136–139; these read DCPGH and NKKD. Residues 136 to 139 are G4; that stretch reads NKKD. The G5 stretch occupies residues 174–176; sequence SAL.

It belongs to the TRAFAC class translation factor GTPase superfamily. Classic translation factor GTPase family. EF-Tu/EF-1A subfamily. As to quaternary structure, monomer.

The protein resides in the cytoplasm. The enzyme catalyses GTP + H2O = GDP + phosphate + H(+). Its function is as follows. GTP hydrolase that promotes the GTP-dependent binding of aminoacyl-tRNA to the A-site of ribosomes during protein biosynthesis. This Synechocystis sp. (strain ATCC 27184 / PCC 6803 / Kazusa) protein is Elongation factor Tu.